Reading from the N-terminus, the 302-residue chain is Protein transport protein SEC13 homolog A (302 aa).

WD repeat units follow at residues 9–48 (GHSD…GSQH), 54–95 (GHRG…QWTQ), 101–142 (DHKV…GWDT), 148–201 (AHPV…WKMD), 208–251 (KHTD…EQWE), and 257–296 (DFKT…EWEQ).

Belongs to the WD repeat SEC13 family. Interacts with MAG5, SEC31A and SEC31B.

It is found in the golgi apparatus. Its subcellular location is the endoplasmic reticulum. Required for protein transport from the endoplasmic reticulum to the Golgi apparatus. The polypeptide is Protein transport protein SEC13 homolog A (Arabidopsis thaliana (Mouse-ear cress)).